The primary structure comprises 450 residues: Tubulin beta-3 chain (450 aa).

Residues Gln-11, Glu-69, Ser-138, Gly-142, Thr-143, Gly-144, Asn-204, and Asn-226 each coordinate GTP. Glu-69 serves as a coordination point for Mg(2+). A disordered region spans residues 420-450; the sequence is SEYQQYQDATADEEGDYEDEEEGEYQQEEEY. Positions 429-450 are enriched in acidic residues; that stretch reads TADEEGDYEDEEEGEYQQEEEY.

The protein belongs to the tubulin family. As to quaternary structure, dimer of alpha and beta chains. A typical microtubule is a hollow water-filled tube with an outer diameter of 25 nm and an inner diameter of 15 nM. Alpha-beta heterodimers associate head-to-tail to form protofilaments running lengthwise along the microtubule wall with the beta-tubulin subunit facing the microtubule plus end conferring a structural polarity. Microtubules usually have 13 protofilaments but different protofilament numbers can be found in some organisms and specialized cells. Mg(2+) serves as cofactor.

The protein localises to the cytoplasm. It is found in the cytoskeleton. In terms of biological role, tubulin is the major constituent of microtubules, a cylinder consisting of laterally associated linear protofilaments composed of alpha- and beta-tubulin heterodimers. Microtubules grow by the addition of GTP-tubulin dimers to the microtubule end, where a stabilizing cap forms. Below the cap, tubulin dimers are in GDP-bound state, owing to GTPase activity of alpha-tubulin. This is Tubulin beta-3 chain (TUBB3) from Arabidopsis thaliana (Mouse-ear cress).